The chain runs to 278 residues: MRSVEYLAYLRSKYGIRPRRRLGQHFMVDDNILEFMVEAAEVREDDIVLEIGPGPGLLTRYLMTRAGQVIAVELDGRMVEILKRELGEAPNLEIVRADFLEYDVPDDVNKVVANIPYNISSPITFKLLELDIDVAVLTYQREFAERMVAEPGSKKYSRLTVMVNLLADVELLRGVPRRAFIPPPRVGSSVVRLTPKSEEERPDVDPDTLESVCRALFQHKNKTVRNALLLSAHEWATDREQAREVLEELPEDLLSERPLHLPPERVAELAAAIESALG.

Positions 25, 27, 52, 73, 98, and 114 each coordinate S-adenosyl-L-methionine.

Belongs to the class I-like SAM-binding methyltransferase superfamily. rRNA adenine N(6)-methyltransferase family. RsmA subfamily.

Its subcellular location is the cytoplasm. Functionally, specifically dimethylates two adjacent adenosines in the loop of a conserved hairpin near the 3'-end of 16S rRNA in the 30S particle. May play a critical role in biogenesis of 30S subunits. The sequence is that of Probable ribosomal RNA small subunit methyltransferase A from Methanopyrus kandleri (strain AV19 / DSM 6324 / JCM 9639 / NBRC 100938).